The primary structure comprises 133 residues: Ribosome-binding factor A (133 aa).

It belongs to the RbfA family. In terms of assembly, monomer. Binds 30S ribosomal subunits, but not 50S ribosomal subunits or 70S ribosomes.

The protein resides in the cytoplasm. Functionally, one of several proteins that assist in the late maturation steps of the functional core of the 30S ribosomal subunit. Associates with free 30S ribosomal subunits (but not with 30S subunits that are part of 70S ribosomes or polysomes). Required for efficient processing of 16S rRNA. May interact with the 5'-terminal helix region of 16S rRNA. This chain is Ribosome-binding factor A, found in Cytophaga hutchinsonii (strain ATCC 33406 / DSM 1761 / CIP 103989 / NBRC 15051 / NCIMB 9469 / D465).